The chain runs to 465 residues: Protein hedgehog (465 aa).

The N-palmitoyl cysteine moiety is linked to residue cysteine 79. Ca(2+) is bound by residues glutamate 143, glutamate 144, aspartate 149, threonine 179, glutamate 180, aspartate 183, and aspartate 185. The Cholesterol glycine ester moiety is linked to residue glycine 251.

This sequence belongs to the hedgehog family. Interacts with shf. The C-terminal part of the hedgehog protein precursor displays an autoproteolysis activity that results in the cleavage of the full-length protein into two parts (N-product and C-product). In addition, the C-terminal part displays a cholesterol transferase activity that results by the covalent attachment of a cholesterol moiety to the C-terminal of the newly generated N-product. The N-product is the active species in both local and long-range signaling, whereas the C-product has no signaling activity. Post-translationally, cholesterylation is required for N-product targeting to lipid rafts and multimerization. In terms of processing, N-palmitoylation by Rasp of the hedgehog N-product, within the secretory pathway, is required for the embryonic and larval patterning activities of the hedgehog signal.

The protein resides in the nucleus. It is found in the cytoplasm. Its subcellular location is the cell membrane. It catalyses the reaction glycyl-L-cysteinyl-[protein] + cholesterol + H(+) = [protein]-C-terminal glycyl cholesterol ester + N-terminal L-cysteinyl-[protein]. Functionally, the C-terminal part of the hedgehog protein precursor displays an autoproteolysis activity that results in the cleavage of the full-length protein into two parts (N-product and C-product). In addition, the C-terminal part displays a cholesterol transferase activity that results by the covalent attachment of a cholesterol moiety to the C-terminal of the newly generated N-product. Once cleaved, the C-product has no signaling activity and diffuses from the cell. Its function is as follows. The dually lipidated hedgehog protein N-product is a morphogen which is essential for a variety of patterning events during development. Establishes the anterior-posterior axis of the embryonic segments and patterns the larval imaginal disks. Binds to the patched (ptc) receptor, which functions in association with smoothened (smo), to activate the transcription of target genes wingless (wg), decapentaplegic (dpp) and ptc. In the absence of hh, ptc represses the constitutive signaling activity of smo through fused (fu). Essential component of a signaling pathway which regulates the Duox-dependent gut immune response to bacterial uracil; required to activate Cad99C-dependent endosome formation, norpA-dependent Ca2+ mobilization and p38 MAPK, which are essential steps in the Duox-dependent production of reactive oxygen species (ROS) in response to intestinal bacterial infection. During photoreceptor differentiation, it up-regulates transcription of Ubr3, which in turn promotes the hh-signaling pathway by mediating the ubiquitination and degradation of cos. In Drosophila sechellia (Fruit fly), this protein is Protein hedgehog.